Consider the following 172-residue polypeptide: Ribosome maturation factor RimM (172 aa).

A PRC barrel domain is found at 96–168; sequence DGEFYYHEII…RVDVEILEGL (73 aa).

This sequence belongs to the RimM family. In terms of assembly, binds ribosomal protein uS19.

The protein resides in the cytoplasm. In terms of biological role, an accessory protein needed during the final step in the assembly of 30S ribosomal subunit, possibly for assembly of the head region. Essential for efficient processing of 16S rRNA. May be needed both before and after RbfA during the maturation of 16S rRNA. It has affinity for free ribosomal 30S subunits but not for 70S ribosomes. This Streptococcus pneumoniae serotype 4 (strain ATCC BAA-334 / TIGR4) protein is Ribosome maturation factor RimM.